Here is a 915-residue protein sequence, read N- to C-terminus: Protein inturned (915 aa).

The interval 88–144 is disordered; sequence NAKRQANSSNKSEAKLKKLTKILRRKRRPSQRKAEGKDSSQRPASILKNQAGQRPGV. A compositionally biased stretch (basic residues) spans 104 to 118; it reads KKLTKILRRKRRPSQ. Residues 128–139 are compositionally biased toward polar residues; it reads QRPASILKNQAG. The PDZ domain occupies 165-253; sequence SVSSSSADRG…PMQVRLTLET (89 aa). Residues 688–738 are disordered; it reads GIRGRRASPQRSQSDSGSEGHADGTPASVARRDSLGSGGSDGSLGSAGFLK.

This sequence belongs to the inturned family.

The protein resides in the cytoplasm. It is found in the cell surface. Its subcellular location is the cytoskeleton. It localises to the cilium basal body. Functionally, plays a key role in ciliogenesis and embryonic development. Regulator of cilia formation by controlling the organization of the apical actin cytoskeleton and the positioning of the basal bodies at the apical cell surface, which in turn is essential for the normal orientation of elongating ciliary microtubules. Plays a key role in definition of cell polarity via its role in ciliogenesis but not via conversion extension. Has an indirect effect on hedgehog signaling. In Danio rerio (Zebrafish), this protein is Protein inturned (intu).